Here is a 187-residue protein sequence, read N- to C-terminus: V-type ATP synthase subunit E (187 aa).

The protein belongs to the V-ATPase E subunit family.

Its function is as follows. Produces ATP from ADP in the presence of a proton gradient across the membrane. The chain is V-type ATP synthase subunit E from Geotalea uraniireducens (strain Rf4) (Geobacter uraniireducens).